We begin with the raw amino-acid sequence, 693 residues long: Glycine--tRNA ligase beta subunit (693 aa).

Positions 65 to 74 (QPDKSVEKRG) are enriched in basic and acidic residues. Positions 65-84 (QPDKSVEKRGPAVKAAFDDS) are disordered.

This sequence belongs to the class-II aminoacyl-tRNA synthetase family. Tetramer of two alpha and two beta subunits.

Its subcellular location is the cytoplasm. It catalyses the reaction tRNA(Gly) + glycine + ATP = glycyl-tRNA(Gly) + AMP + diphosphate. The protein is Glycine--tRNA ligase beta subunit of Marinobacter nauticus (strain ATCC 700491 / DSM 11845 / VT8) (Marinobacter aquaeolei).